The primary structure comprises 197 residues: MRTGRIERNTAETRILIEVNLDGRGNYDVSTGIGFLDHMVEQFSKHSLIDVTMKVDGDLHVDQHHTTEDSAIALGQALGEALGDKAGIGRYGQAYSPMDETLSRVALDISGRPYTVFRAGFSQEKLGEWDTELIEHWFQSVAQAAGITLHIELLYGTNNHHICESIYKGFARAMRQAVELDGRKGGAIPSTKGQLGG.

The protein belongs to the imidazoleglycerol-phosphate dehydratase family.

It localises to the cytoplasm. The enzyme catalyses D-erythro-1-(imidazol-4-yl)glycerol 3-phosphate = 3-(imidazol-4-yl)-2-oxopropyl phosphate + H2O. Its pathway is amino-acid biosynthesis; L-histidine biosynthesis; L-histidine from 5-phospho-alpha-D-ribose 1-diphosphate: step 6/9. The chain is Imidazoleglycerol-phosphate dehydratase from Erythrobacter litoralis (strain HTCC2594).